The following is a 37-amino-acid chain: MKVNPSVKKICDKCKVIRRNGRVMVICENPRHKQRQG.

The protein belongs to the bacterial ribosomal protein bL36 family.

In Leifsonia xyli subsp. xyli (strain CTCB07), this protein is Large ribosomal subunit protein bL36A.